Reading from the N-terminus, the 440-residue chain is Alpha-ionylideneethane synthase aba3 (440 aa).

It belongs to the alpha-ionylideneethane synthase family.

It functions in the pathway hormone biosynthesis. Functionally, alpha-ionylideneethane synthase; part of the gene cluster that mediates the biosynthesis of abscisic acid (ABA), a phytohormone that acts antagonistically toward salicylic acid (SA), jasmonic acid (JA) and ethylene (ETH) signaling, to impede plant defense responses. The first step of the pathway catalyzes the reaction from farnesyl diphosphate to alpha-ionylideneethane performed by the alpha-ionylideneethane synthase aba3 via a three-step reaction mechanism involving 2 neutral intermediates, beta-farnesene and allofarnesene. The cytochrome P450 monooxygenase aba1 might then be involved in the conversion of alpha-ionylideneethane to alpha-ionylideneacetic acid. Alpha-ionylideneacetic acid is further converted to abscisic acid in 2 steps involving the cytochrome P450 monooxygenase aba2 and the short-chain dehydrogenase/reductase aba4, via the intermediates 1'-deoxy-ABA or 1',4'-trans-diol-ABA, depending on the order of action of these 2 enzymes. Aba2 is responsible for the hydroxylation of carbon atom C-1' and aba4 might be involved in the oxidation of the C-4' carbon atom. The protein is Alpha-ionylideneethane synthase aba3 of Botryotinia fuckeliana (strain B05.10) (Noble rot fungus).